The chain runs to 166 residues: D-aminoacyl-tRNA deacylase (166 aa).

The short motif at 142–143 (GP) is the Gly-cisPro motif, important for rejection of L-amino acids element.

It belongs to the DTD family. In terms of assembly, homodimer.

The protein resides in the cytoplasm. The enzyme catalyses glycyl-tRNA(Ala) + H2O = tRNA(Ala) + glycine + H(+). It carries out the reaction a D-aminoacyl-tRNA + H2O = a tRNA + a D-alpha-amino acid + H(+). Its function is as follows. An aminoacyl-tRNA editing enzyme that deacylates mischarged D-aminoacyl-tRNAs. Also deacylates mischarged glycyl-tRNA(Ala), protecting cells against glycine mischarging by AlaRS. Acts via tRNA-based rather than protein-based catalysis; rejects L-amino acids rather than detecting D-amino acids in the active site. By recycling D-aminoacyl-tRNA to D-amino acids and free tRNA molecules, this enzyme counteracts the toxicity associated with the formation of D-aminoacyl-tRNA entities in vivo and helps enforce protein L-homochirality. The protein is D-aminoacyl-tRNA deacylase of Ralstonia nicotianae (strain ATCC BAA-1114 / GMI1000) (Ralstonia solanacearum).